The following is a 312-amino-acid chain: Olfactory receptor 4L1 (312 aa).

Topologically, residues Met-1 to Ile-25 are extracellular. Asn-5 carries N-linked (GlcNAc...) asparagine glycosylation. A helical membrane pass occupies residues Phe-26–Val-49. Residues Thr-50–Ser-57 lie on the Cytoplasmic side of the membrane. The chain crosses the membrane as a helical span at residues Pro-58–Pro-79. Residues Lys-80–Gln-100 lie on the Extracellular side of the membrane. A disulfide bridge links Cys-97 with Cys-189. A helical transmembrane segment spans residues Met-101–Phe-120. The Cytoplasmic segment spans residues Asp-121–Lys-139. The chain crosses the membrane as a helical span at residues Leu-140–Ser-158. The Extracellular segment spans residues Gln-159 to Leu-195. A helical membrane pass occupies residues Glu-196 to Ile-219. Residues Val-220–Lys-235 are Cytoplasmic-facing. The chain crosses the membrane as a helical span at residues Ala-236 to Tyr-258. Topologically, residues Val-259–Lys-269 are extracellular. Asn-268 carries an N-linked (GlcNAc...) asparagine glycan. The helical transmembrane segment at Thr-270 to Leu-289 threads the bilayer. The Cytoplasmic portion of the chain corresponds to Arg-290–Phe-312.

The protein belongs to the G-protein coupled receptor 1 family.

Its subcellular location is the cell membrane. In terms of biological role, odorant receptor. The protein is Olfactory receptor 4L1 (OR4L1) of Homo sapiens (Human).